Reading from the N-terminus, the 388-residue chain is Xylose isomerase (388 aa).

Residues H54 and D57 contribute to the active site. Positions 181, 217, 220, 245, 255, 257, and 287 each coordinate Mg(2+).

Belongs to the xylose isomerase family. As to quaternary structure, homotetramer. The cofactor is Mg(2+).

It localises to the cytoplasm. It carries out the reaction alpha-D-xylose = alpha-D-xylulofuranose. In Streptomyces thermocyaneoviolaceus, this protein is Xylose isomerase.